A 962-amino-acid chain; its full sequence is Leucine--tRNA ligase (962 aa).

Positions 41 to 51 (PYLNGNLHAGH) match the 'HIGH' region motif. The 'KMSKS' region signature appears at 631-635 (KMSKS). Position 634 (K634) interacts with ATP.

The protein belongs to the class-I aminoacyl-tRNA synthetase family.

The protein localises to the cytoplasm. It carries out the reaction tRNA(Leu) + L-leucine + ATP = L-leucyl-tRNA(Leu) + AMP + diphosphate. The chain is Leucine--tRNA ligase from Methanococcoides burtonii (strain DSM 6242 / NBRC 107633 / OCM 468 / ACE-M).